The chain runs to 622 residues: Neuronal acetylcholine receptor subunit alpha-4 (622 aa).

The first 23 residues, 1–23 (MGFLVSKGNLLLLLCASIFPAFG), serve as a signal peptide directing secretion. Residues 24–237 (HVETRAHAEE…ITYSFIIRRL (214 aa)) lie on the Extracellular side of the membrane. Residue N52 is glycosylated (N-linked (GlcNAc...) asparagine). Ca(2+) contacts are provided by V71 and E73. N102 is a glycosylation site (N-linked (GlcNAc...) asparagine). Intrachain disulfides connect C156–C170 and C220–C221. Residues 238-262 (PLFYTINLIIPCLLISCLTVLVFYL) form a helical membrane-spanning segment. C266 carries S-palmitoyl cysteine lipidation. A run of 2 helical transmembrane segments spans residues 270–288 (ITLC…LLIT) and 304–325 (YLLF…VLNV). At 326–595 (HHRSPRTHTM…WKYVAMVIDR (270 aa)) the chain is on the cytoplasmic side. Disordered stretches follow at residues 380–477 (WSET…TEEG) and 497–516 (QTNG…LNEE). The span at 390-407 (TTSSSPSPQSNEPSPTSS) shows a compositional bias: low complexity. Composition is skewed to polar residues over residues 450 to 472 (SDTQ…YSPN) and 497 to 508 (QTNGHSSASPAS). The chain crosses the membrane as a helical span at residues 596-614 (IFLWMFIIVCLLGTVGLFL).

Belongs to the ligand-gated ion channel (TC 1.A.9) family. Acetylcholine receptor (TC 1.A.9.1) subfamily. Alpha-4/CHRNA4 sub-subfamily. Neuronal AChR is composed of two different types of subunits: alpha and beta. CHRNA4 forms heteropentameric neuronal acetylcholine receptors with CHRNB2 and CHRNB4, as well as CHRNA5 and CHRNB3 as accesory subunits. Found in two major stoichiometric forms, LS (low agonist sensitivity): (CHRNA4)3:(CHRNB2)2 and HS (high agonist sensitivity): (CHRNA4)2:(CHRNB2)3, the two stoichiometric forms differ in their unitary conductance, calcium permeability, ACh sensitivity and potentiation by divalent cation. Cells produce predominantly an (CHRNA4)3:(CHRNB2)2 nAChR. The (CHRNA4)2:(CHRNB2)3 expression is selectively up-regulated by nicotine and has lower single channel conductance and calcium permeability. In the striatum, also forms CHRNA4:CHRNA6:CHRNB2 complexes. Also found in the stoichiometric form: (CHRNA4:CHRNB2)2:CHRNB3.

Its subcellular location is the synaptic cell membrane. It is found in the cell membrane. The catalysed reaction is Ca(2+)(in) = Ca(2+)(out). It carries out the reaction K(+)(in) = K(+)(out). It catalyses the reaction Na(+)(in) = Na(+)(out). Its activity is regulated as follows. Activated by a myriad of ligands such as acetylcholine, cytisine, nicotine, choline and epibatidine. Channel potentiation by calcium is stoichiometry-selective, CHRNA4:CHRNB2 nACh receptor is achieved by calcium association with topographically distinct sites framed by anionic residues within the CHRNA4 subunit and between the CHRNA4 and CHRNB2 subunits. nAChR activity is inhibited by the antagonist alpha-conotoxins BuIA, PnIA, GID and MII, small disulfide-constrained peptides from cone snails. Component of neuronal acetylcholine receptors (nAChRs) that function as pentameric, ligand-gated cation channels with high calcium permeability among other activities. nAChRs are excitatory neurotrasnmitter receptors formed by a collection of nAChR subunits known to mediate synaptic transmission in the nervous system and the neuromuscular junction. Each nAchR subunit confers differential attributes to channel properties, including activation, deactivation and desensitization kinetics, pH sensitivity, cation permeability, and binding to allosteric modulators. CHRNA4 forms heteropentameric neuronal acetylcholine receptors with CHRNB2 and CHRNB4, as well as CHRNA5 and CHRNB3 as accesory subunits. Is the most abundant nAChR subtype expressed in the central nervous system. Found in two major stoichiometric forms,(CHRNA4)3:(CHRNB2)2 and (CHRNA4)2:(CHRNB2)3, the two stoichiometric forms differ in their unitary conductance, calcium permeability, ACh sensitivity and potentiation by divalent cation. Involved in the modulation of calcium-dependent signaling pathways, influences the release of neurotransmitters, including dopamine, glutamate and GABA. The sequence is that of Neuronal acetylcholine receptor subunit alpha-4 (CHRNA4) from Gallus gallus (Chicken).